The primary structure comprises 156 residues: Ribosomal RNA large subunit methyltransferase H (156 aa).

Residues leucine 73, glycine 104, and 123 to 128 (LSKLTL) each bind S-adenosyl-L-methionine.

The protein belongs to the RNA methyltransferase RlmH family. Homodimer.

It localises to the cytoplasm. The catalysed reaction is pseudouridine(1915) in 23S rRNA + S-adenosyl-L-methionine = N(3)-methylpseudouridine(1915) in 23S rRNA + S-adenosyl-L-homocysteine + H(+). Functionally, specifically methylates the pseudouridine at position 1915 (m3Psi1915) in 23S rRNA. The protein is Ribosomal RNA large subunit methyltransferase H of Hydrogenovibrio crunogenus (strain DSM 25203 / XCL-2) (Thiomicrospira crunogena).